The primary structure comprises 213 residues: MTFDKTIPKATIKRLSLYYRIFKRFHSENIEKASSKQIAEAIGIDSATVRRDFSYFGELGRRGFGYDVKKLMNFFADILNDTSTTNVLLVGVGNIGRALLNYRFHERNKMKIAMAFDTDDNEQVGQTTSDGIPIYGISSIKEKLIGTDVQTAILTVPSSKAQEVANILIDAGIKGILCFSPVHLSLPKGVVAQYVDLTSELQTLLYFMNQEQF.

Positions 17–56 (LYYRIFKRFHSENIEKASSKQIAEAIGIDSATVRRDFSYF) form a DNA-binding region, H-T-H motif. 91–96 (GVGNIG) is an NAD(+) binding site.

The protein belongs to the transcriptional regulatory Rex family. Homodimer.

It is found in the cytoplasm. In terms of biological role, modulates transcription in response to changes in cellular NADH/NAD(+) redox state. The polypeptide is Redox-sensing transcriptional repressor Rex (Streptococcus mutans serotype c (strain ATCC 700610 / UA159)).